The sequence spans 181 residues: DNA-packaging protein NU1 homolog (181 aa).

This sequence to phage lambda DNA packaging protein NU1.

In Escherichia coli (strain K12), this protein is DNA-packaging protein NU1 homolog (nohD).